The chain runs to 347 residues: MSEPIVLGIESTCDETAAAVVQGRTLISNVVASSMDEHARYGGVIPEIASRAHAEAFVPCVSKALADANMTLSDVDAIAVSAGPGLAGCLAVGVSGAKSLAWAANKPIYGINHVIGHIAVTQLQFGPFPKDTLALIVSGGHTSLLHVEDVARHIDVVGTTLDDAAGECFDKVARLLGFPYPGGPHIDRHAQLGNPHAIKVPQGLTQGKAGQQHPYDFSFSGVKTAVARWIEQQQAEGNEIPIDDVCASLADSVATVLARKAMRGCEQYGSKTLIVGGGFSANSQLRAKLLEVGAKHGVEVRIPQIKLCTDNGAMVAMLGVNLVESGVKPSEPDFAIDSAMPLTKISM.

Residues His-113 and His-117 each contribute to the Fe cation site. Residues 136–140 (IVSGG), Asp-170, Gly-183, Asp-187, and Asn-282 contribute to the substrate site. Position 310 (Asp-310) interacts with Fe cation.

This sequence belongs to the KAE1 / TsaD family. Fe(2+) serves as cofactor.

It is found in the cytoplasm. It catalyses the reaction L-threonylcarbamoyladenylate + adenosine(37) in tRNA = N(6)-L-threonylcarbamoyladenosine(37) in tRNA + AMP + H(+). In terms of biological role, required for the formation of a threonylcarbamoyl group on adenosine at position 37 (t(6)A37) in tRNAs that read codons beginning with adenine. Is involved in the transfer of the threonylcarbamoyl moiety of threonylcarbamoyl-AMP (TC-AMP) to the N6 group of A37, together with TsaE and TsaB. TsaD likely plays a direct catalytic role in this reaction. The protein is tRNA N6-adenosine threonylcarbamoyltransferase of Bifidobacterium adolescentis (strain ATCC 15703 / DSM 20083 / NCTC 11814 / E194a).